The chain runs to 397 residues: MGCLGNSKTEDQRNEEKAQREANKKIEKQLQKDKQVYRATHRLLLLGAGESGKSTIVKQMRILHVNGFNGDEKATKVQDIKNNLKEAIETIVAAMSNLVPPVELANPENQFRVDYILSVMNVPDFDFPPEFYEHAKALWEDEGVRACYERSNEYQLIDCAQYFLDKIDVIKQDDYVPSDQDLLRCRVLTSGIFETKFQVDKVNFHMFDVGGQRDERRKWIQCFNDVTAIIFVVASSSYNMVIREDNQTNRLQEALNLFKSIWNNRWLRTISVILFLNKQDLLAEKVLAGKSKIELFVLDDRLFQERPFSFIEDYFPEFARYTTPEDATPEPGEDPRVTRAKYFIRDEFLRISTASGDGRHYCYPHFTCAVDTENIRRVFNDCRDIIQRMHLRQYELL.

The interval 1 to 23 (MGCLGNSKTEDQRNEEKAQREAN) is disordered. Residue glycine 2 is the site of N-palmitoyl glycine attachment. The S-palmitoyl cysteine moiety is linked to residue cysteine 3. The segment covering 8–23 (KTEDQRNEEKAQREAN) has biased composition (basic and acidic residues). Residues 39–397 (ATHRLLLLGA…RMHLRQYELL (359 aa)) enclose the G-alpha domain. A G1 motif region spans residues 42-55 (RLLLLGAGESGKST). Residues 47–55 (GAGESGKST), 182–189 (LLRCRVLT), 208–212 (DVGGQ), 277–280 (NKQD), and alanine 369 contribute to the GTP site. Residues serine 54 and threonine 189 each coordinate Mg(2+). A G2 motif region spans residues 181 to 189 (DLLRCRVLT). The segment at 204 to 213 (FHMFDVGGQR) is G3 motif. Residues 273 to 280 (ILFLNKQD) form a G4 motif region. Positions 367 to 372 (TCAVDT) are G5 motif.

Belongs to the G-alpha family. G(s) subfamily. Heterotrimeric G proteins are composed of 3 units; alpha, beta and gamma. The alpha chain contains the guanine nucleotide binding site. Interacts with CRY1; the interaction may block GPCR-mediated regulation of cAMP concentrations. Interacts with ADCY6 and stimulates its adenylyl cyclase activity. Interacts with ADCY2 and ADCY5. Stimulates the ADCY5 adenylyl cyclase activity. Interaction with SASH1.

The protein localises to the cell membrane. Its function is as follows. Guanine nucleotide-binding proteins (G proteins) function as transducers in numerous signaling pathways controlled by G protein-coupled receptors (GPCRs). Signaling involves the activation of adenylyl cyclases, resulting in increased levels of the signaling molecule cAMP. GNAS functions downstream of several GPCRs, including beta-adrenergic receptors. Stimulates the Ras signaling pathway via RAPGEF2. The sequence is that of Guanine nucleotide-binding protein G(s) subunit alpha (GNAS) from Sus scrofa (Pig).